A 442-amino-acid polypeptide reads, in one-letter code: PTS system oligo-beta-mannoside-specific EIIC component (442 aa).

The PTS EIIC type-3 domain occupies 5–411 (ISQFLVPIAG…LIVFVIWFPF (407 aa)). Transmembrane regions (helical) follow at residues 28–48 (AFML…LTNL), 67–87 (FGIA…FGIG), 97–117 (EAVF…PFII), 138–157 (GMFL…RRIV), 177–197 (FAAL…NVMV), 205–225 (MHDV…SGII), 228–248 (LIAV…QIII), 286–306 (TVGM…LIFM), 329–349 (PIIF…WVLA), 365–385 (LVPP…INGI), and 391–411 (IMGG…WFPF).

It localises to the cell membrane. In terms of biological role, the phosphoenolpyruvate-dependent sugar phosphotransferase system (sugar PTS), a major carbohydrate active transport system, catalyzes the phosphorylation of incoming sugar substrates concomitantly with their translocation across the cell membrane. The enzyme II GmuABC PTS system is involved in the transport of oligo-glucomannans such as cellobiose or mannobiose. The chain is PTS system oligo-beta-mannoside-specific EIIC component from Bacillus subtilis (strain 168).